A 71-amino-acid polypeptide reads, in one-letter code: Phosphatidylinositol N-acetylglucosaminyltransferase subunit Y (71 aa).

At 1 to 5 (MIRSL) the chain is on the cytoplasmic side. Residues 6-26 (PTMTVLIPLVSLAGLLYSASV) form a helical membrane-spanning segment. Over 27–44 (EEGFPEGCTSASSLCFYS) the chain is Lumenal. A helical transmembrane segment spans residues 45–65 (LLLPVTVPVYVFFHLWTWMGL). Over 66 to 71 (KLFRHN) the chain is Cytoplasmic.

In terms of assembly, component of the glycosylphosphatidylinositol-N-acetylglucosaminyltransferase (GPI-GnT) complex composed at least by PIGA, PIGC, PIGH, PIGP, PIGQ, PIGY and DPM2. Interacts directly with PIGA; this interaction regulates glycosylphosphatidylinositol-N-acetylglucosaminyltransferase activity. Does not interact with Ras proteins.

Its subcellular location is the endoplasmic reticulum membrane. It participates in glycolipid biosynthesis; glycosylphosphatidylinositol-anchor biosynthesis. Functionally, part of the glycosylphosphatidylinositol-N-acetylglucosaminyltransferase (GPI-GnT) complex that catalyzes the transfer of N-acetylglucosamine from UDP-N-acetylglucosamine to phosphatidylinositol and participates in the first step of GPI biosynthesis. May act by regulating the catalytic subunit PIGA. This chain is Phosphatidylinositol N-acetylglucosaminyltransferase subunit Y, found in Mus musculus (Mouse).